A 166-amino-acid polypeptide reads, in one-letter code: Deglycase PfpI (166 aa).

Positions 1 to 166 constitute a PfpI endopeptidase domain; sequence MKILFLSANE…WMREFVKLLK (166 aa). Catalysis depends on Cys-100, which acts as the Nucleophile. Residue His-101 is part of the active site.

Belongs to the peptidase C56 family. Homooligomer. Exists in two functional species: the predominant form is a homohexamer that comprises about 90% of the total activity, and the minor form is trimeric.

Its subcellular location is the cytoplasm. It catalyses the reaction N(omega)-(1-hydroxy-2-oxopropyl)-L-arginyl-[protein] + H2O = lactate + L-arginyl-[protein] + H(+). The enzyme catalyses N(6)-(1-hydroxy-2-oxopropyl)-L-lysyl-[protein] + H2O = lactate + L-lysyl-[protein] + H(+). The catalysed reaction is S-(1-hydroxy-2-oxopropyl)-L-cysteinyl-[protein] + H2O = lactate + L-cysteinyl-[protein] + H(+). It carries out the reaction N(omega)-(1-hydroxy-2-oxoethyl)-L-arginyl-[protein] + H2O = L-arginyl-[protein] + glycolate + H(+). It catalyses the reaction N(6)-(1-hydroxy-2-oxoethyl)-L-lysyl-[protein] + H2O = glycolate + L-lysyl-[protein] + H(+). The enzyme catalyses S-(1-hydroxy-2-oxoethyl)-L-cysteinyl-[protein] + H2O = glycolate + L-cysteinyl-[protein] + H(+). In terms of biological role, deglycase that catalyzes the deglycation of the Maillard adducts formed between amino groups of proteins and reactive carbonyl groups of glyoxals. Thus, functions as a protein deglycase that repairs methylglyoxal- and glyoxal-glycated proteins, and releases repaired proteins and lactate or glycolate, respectively. Deglycates cysteine, arginine and lysine residues in proteins, and thus reactivates these proteins by reversing glycation by glyoxals. Thus, was shown to afford full protection against glycation of thioredoxin by glyoxal. Acts on early glycation intermediates (hemithioacetals and aminocarbinols), preventing the formation of advanced glycation endproducts (AGE) that cause irreversible damage. Prevents acrylamide formation in asparagine/glyoxal and asparagine/sugar mixtures, likely by degrading asparagine/glyoxal Maillard adducts formed at high temperatures. Also displays proteolytic activity. Cleaves at the carboxyl side of both basic and hydrophobic residues in the P1 position, indicating trypsin- and chymotrypsin-like specificities. The chain is Deglycase PfpI from Pyrococcus furiosus (strain ATCC 43587 / DSM 3638 / JCM 8422 / Vc1).